The chain runs to 450 residues: UDP-N-acetylmuramoylalanine--D-glutamate ligase (450 aa).

119–125 (GSNGKTT) contacts ATP.

The protein belongs to the MurCDEF family.

The protein resides in the cytoplasm. It catalyses the reaction UDP-N-acetyl-alpha-D-muramoyl-L-alanine + D-glutamate + ATP = UDP-N-acetyl-alpha-D-muramoyl-L-alanyl-D-glutamate + ADP + phosphate + H(+). It functions in the pathway cell wall biogenesis; peptidoglycan biosynthesis. In terms of biological role, cell wall formation. Catalyzes the addition of glutamate to the nucleotide precursor UDP-N-acetylmuramoyl-L-alanine (UMA). The chain is UDP-N-acetylmuramoylalanine--D-glutamate ligase from Bacillus cereus (strain Q1).